Consider the following 1110-residue polypeptide: METNLLPGGPSYGLLDESGVQMETTVCRPVLSPTHINGTASETFTVLQQKMRIVEEQTSSLRDDLIMLGYGDRRGQLETPNYLEDPASQKAISPIPNEVICPESPGNLWRNYEFLVNRMCYLENLIQSLKMNIFHLQTEKESNPQKTAFLNDQLNIIQGEHSKGLKLLQLEVMNLRQQLKVVKEEEDRAQDEMQRLTATLEIATETKKNAAVIEEELKTTKRKMNLKIQELRRQLAQEKLVRESLETSASSMLLKVQEMGSVVEAERQQVHALQEKCTALHSSMKTTQDLLAQEQRKNEDLGMTISQLKSDLNSRDNLICKLVEENKATQISLKKEHEENIYLKSEILSLQDVSGKAQVLNDQLSKKCSELTSMLQVVKMENSRIIAEHQAILKVEQKMITETFQEQNLLLDAAHASITGELQAVQNEKAQLQIHLDHLILEHNQCLQKSQEAEKRTVVQKELLESTIARLQGELKASLQEKKSLLEKNEWFQREVNKTEKEVAKEKCNLEKELAESKEDINVLNQNLQTLMEENKHLTNKMASLEHHKATSDYQGKVEKALEKITDSKNMLAYEKGKLQTKVKQLEAQLHTFAETMLQKDHLHKLNKALEVKYTQANSELSASKAYLEQTEAHLKEMKSILGKNEEELAQAVKCRDAALKESQKLKGDLKALEDRESKKVGNFQKQLAEAKEDNCKVTIMLENVLASHSKMQGALEKVQIELGRRDSEIAGLKKERSLNQQRVQKLEAEVDQWQARMLIVEAQHGSEIEPLQKSLDITREDNRKLAMSLEQALQTNGHLQSKLDHLQEKLESKERERQSLEAFKEQVAEESKVEAELHAERIEALRKQFQTERETAKKASQREVSELKKALDEANFRSVEVSRANRELRHKATELEKVVNSNKEKLKNQRAQIKLHLSAKANNAQNMERMKQIEMELRQMEIIKDQYQKKNYEQSLSIQRFVSEMNTLQKEMELLTKSQYETSARNKQQELRLVAERKMRLELENRCKELEETIRHLKRCKEATENKLKEASVESEQITANLEEAHRWFKCRFDGLQLELTKNRLQRLPREDRWLEENQDMMHNVATSQSVLHRWETKQKYHSDTERKK.

4 coiled-coil regions span residues 122–250, 288–313, 413–695, and 728–1048; these read LENL…TSAS, QDLLAQEQRKNEDLGMTISQLKSDLN, AAHA…KEDN, and SEIA…EAHR.

This is Coiled-coil domain-containing protein 150 (Ccdc150) from Mus musculus (Mouse).